The sequence spans 88 residues: Small ribosomal subunit protein uS15 (88 aa).

The protein belongs to the universal ribosomal protein uS15 family. As to quaternary structure, part of the 30S ribosomal subunit. Forms a bridge to the 50S subunit in the 70S ribosome, contacting the 23S rRNA.

In terms of biological role, one of the primary rRNA binding proteins, it binds directly to 16S rRNA where it helps nucleate assembly of the platform of the 30S subunit by binding and bridging several RNA helices of the 16S rRNA. Its function is as follows. Forms an intersubunit bridge (bridge B4) with the 23S rRNA of the 50S subunit in the ribosome. In Psychrobacter cryohalolentis (strain ATCC BAA-1226 / DSM 17306 / VKM B-2378 / K5), this protein is Small ribosomal subunit protein uS15.